A 498-amino-acid chain; its full sequence is Probable cytosol aminopeptidase (498 aa).

Mn(2+) contacts are provided by Lys263 and Asp268. Residue Lys275 is part of the active site. Asp286, Asp345, and Glu347 together coordinate Mn(2+). Arg349 is a catalytic residue.

The protein belongs to the peptidase M17 family. Mn(2+) serves as cofactor.

The protein resides in the cytoplasm. It catalyses the reaction Release of an N-terminal amino acid, Xaa-|-Yaa-, in which Xaa is preferably Leu, but may be other amino acids including Pro although not Arg or Lys, and Yaa may be Pro. Amino acid amides and methyl esters are also readily hydrolyzed, but rates on arylamides are exceedingly low.. It carries out the reaction Release of an N-terminal amino acid, preferentially leucine, but not glutamic or aspartic acids.. Functionally, presumably involved in the processing and regular turnover of intracellular proteins. Catalyzes the removal of unsubstituted N-terminal amino acids from various peptides. This chain is Probable cytosol aminopeptidase, found in Rhodopseudomonas palustris (strain BisA53).